A 91-amino-acid polypeptide reads, in one-letter code: Small ribosomal subunit protein uS19 (91 aa).

The protein belongs to the universal ribosomal protein uS19 family.

Protein S19 forms a complex with S13 that binds strongly to the 16S ribosomal RNA. The sequence is that of Small ribosomal subunit protein uS19 from Ralstonia nicotianae (strain ATCC BAA-1114 / GMI1000) (Ralstonia solanacearum).